A 37-amino-acid polypeptide reads, in one-letter code: Large ribosomal subunit protein bL36c (37 aa).

Belongs to the bacterial ribosomal protein bL36 family.

It is found in the plastid. Its subcellular location is the chloroplast. The sequence is that of Large ribosomal subunit protein bL36c from Ostreococcus tauri.